Consider the following 354-residue polypeptide: Uroporphyrinogen decarboxylase (354 aa).

Substrate-binding positions include 27-31 (RQAGR), Asp77, Tyr154, Thr209, and His327.

This sequence belongs to the uroporphyrinogen decarboxylase family. Homodimer.

It is found in the cytoplasm. It carries out the reaction uroporphyrinogen III + 4 H(+) = coproporphyrinogen III + 4 CO2. It participates in porphyrin-containing compound metabolism; protoporphyrin-IX biosynthesis; coproporphyrinogen-III from 5-aminolevulinate: step 4/4. Catalyzes the decarboxylation of four acetate groups of uroporphyrinogen-III to yield coproporphyrinogen-III. The sequence is that of Uroporphyrinogen decarboxylase from Salmonella heidelberg (strain SL476).